A 198-amino-acid polypeptide reads, in one-letter code: Carnitine operon protein CaiE (198 aa).

The segment at 174–198 (KPLTQAEENRPRLKGTTDVKPKSAQ) is disordered. Residues 180–198 (EENRPRLKGTTDVKPKSAQ) show a composition bias toward basic and acidic residues.

The protein belongs to the transferase hexapeptide repeat family.

Its pathway is amine and polyamine metabolism; carnitine metabolism. Its function is as follows. Overproduction of CaiE stimulates the activity of CaiB and CaiD. The protein is Carnitine operon protein CaiE of Salmonella typhimurium (strain LT2 / SGSC1412 / ATCC 700720).